Here is a 181-residue protein sequence, read N- to C-terminus: Oligoribonuclease (181 aa).

Positions 8–171 constitute an Exonuclease domain; the sequence is LIWIDMEMTG…ADIYDSIEEL (164 aa). Y129 is a catalytic residue.

It belongs to the oligoribonuclease family.

It is found in the cytoplasm. Functionally, 3'-to-5' exoribonuclease specific for small oligoribonucleotides. The polypeptide is Oligoribonuclease (Nitrosomonas eutropha (strain DSM 101675 / C91 / Nm57)).